The sequence spans 323 residues: Ribosomal protein L11 methyltransferase (323 aa).

Residues threonine 160, glycine 184, aspartate 206, and asparagine 257 each coordinate S-adenosyl-L-methionine.

This sequence belongs to the methyltransferase superfamily. PrmA family.

Its subcellular location is the cytoplasm. It carries out the reaction L-lysyl-[protein] + 3 S-adenosyl-L-methionine = N(6),N(6),N(6)-trimethyl-L-lysyl-[protein] + 3 S-adenosyl-L-homocysteine + 3 H(+). Methylates ribosomal protein L11. The sequence is that of Ribosomal protein L11 methyltransferase from Agathobacter rectalis (strain ATCC 33656 / DSM 3377 / JCM 17463 / KCTC 5835 / VPI 0990) (Eubacterium rectale).